The sequence spans 400 residues: NADH dehydrogenase-like protein Rv1812c (400 aa).

This sequence belongs to the NADH dehydrogenase family. FAD serves as cofactor.

This is NADH dehydrogenase-like protein Rv1812c from Mycobacterium tuberculosis (strain ATCC 25618 / H37Rv).